The sequence spans 440 residues: 2-methylisoborneol synthase (440 aa).

Residues 1 to 116 (MPDSGPLGPH…SPAPAEPAAG (116 aa)) are disordered. Positions 17–27 (TPATTVPDAPA) are enriched in low complexity. Positions 48-58 (PPVPIPSPSPP) are enriched in pro residues. The segment covering 59–75 (SGSASAAADTPDATTVG) has biased composition (low complexity). Pro residues predominate over residues 102–111 (PSLPGSPAPA). The Mg(2+) site is built by D197, D198, E202, N345, S349, and E353.

Belongs to the terpene synthase family. 2-methylisoborneol synthase subfamily. Mg(2+) is required as a cofactor.

The catalysed reaction is (E)-2-methylgeranyl diphosphate + H2O = 2-methylisoborneol + diphosphate. Functionally, catalyzes the cyclization of 2-methylgeranyl diphosphate (2-MeGPP) to 2-methylisoborneol (2-MIB), which likely involves the intermediacy of 2-methyllinalyl diphosphate. In Streptomyces ambofaciens (strain ATCC 23877 / 3486 / DSM 40053 / JCM 4204 / NBRC 12836 / NRRL B-2516), this protein is 2-methylisoborneol synthase.